Consider the following 298-residue polypeptide: Protoheme IX farnesyltransferase (298 aa).

A run of 9 helical transmembrane segments spans residues 28-48 (VVAL…EELV), 50-70 (LKVL…AAAI), 95-117 (LSPA…TLYA), 121-138 (PLTA…AVVY), 149-169 (NIVI…TSVT), 176-196 (AVLL…ALAV), 222-242 (CIFL…LIGM), 243-263 (TGMI…AYAW), and 274-294 (AFNM…ILLV).

This sequence belongs to the UbiA prenyltransferase family. Protoheme IX farnesyltransferase subfamily.

The protein resides in the cell inner membrane. It catalyses the reaction heme b + (2E,6E)-farnesyl diphosphate + H2O = Fe(II)-heme o + diphosphate. The protein operates within porphyrin-containing compound metabolism; heme O biosynthesis; heme O from protoheme: step 1/1. In terms of biological role, converts heme B (protoheme IX) to heme O by substitution of the vinyl group on carbon 2 of heme B porphyrin ring with a hydroxyethyl farnesyl side group. In Idiomarina loihiensis (strain ATCC BAA-735 / DSM 15497 / L2-TR), this protein is Protoheme IX farnesyltransferase.